Here is a 1005-residue protein sequence, read N- to C-terminus: Mitogen-activated protein kinase kinase kinase 10 (1005 aa).

Residues 32 to 96 (VSNPLWMAVF…PSNYVVSDDK (65 aa)) enclose the SH3 domain. Residues 118-380 (LNLDEIIGVG…SCILEQLTTI (263 aa)) form the Protein kinase domain. ATP contacts are provided by residues 124-132 (IGVGGFGKV) and lysine 145. Catalysis depends on aspartate 242, which acts as the Proton acceptor. 2 leucine-zipper regions span residues 404-425 (IQQMFDELRTKEKELRSREEEL) and 439-460 (LKRREQELAEREIDIVERELNI). 4 disordered regions span residues 551–611 (SVLK…KHTP), 647–676 (QSDHRSHPEDTAHAGAPSSDSPKRGSQSRR), 712–736 (FQWAGRGPRRRASSPSRSMSYGEDS), and 758–940 (RSLI…AEGA). Basic and acidic residues-rich tracts occupy residues 576 to 588 (QKERVGGEERLKT) and 648 to 658 (SDHRSHPEDTA). 2 stretches are compositionally biased toward basic and acidic residues: residues 761 to 786 (IRSDSDDIGLDHDNVSSGRGVKEDRG) and 799 to 809 (YKVESFKRDPK). Residues 810–826 (QSLTPTHVTVGRNNTTE) show a composition bias toward polar residues. Over residues 862 to 879 (EPSPFPRLPDPHFVFPPP) the composition is skewed to pro residues. A compositionally biased stretch (low complexity) spans 915–940 (SLSQTHSSSPSSGGGDACSSGSAEGA).

It belongs to the protein kinase superfamily. STE Ser/Thr protein kinase family. MAP kinase kinase kinase subfamily. In terms of assembly, homodimer. Binds to the GTPase rac1 but not cdc42 or rhoA. Interacts (via kinase domain) with pak1 (via kinase domain). Interacts with the ubiquitin-conjugating enzyme ube2d4. The cofactor is Mg(2+). Autophosphorylation on serine and threonine residues within the activation loop plays a role in enzyme activation. In terms of processing, mono- and poly-ubiquitinated. As to expression, in adults, strongly expressed in the brain and spleen with lower levels in pancreas, heart, muscle and kidney (at protein level). In the developing embryo, expressed at stage 22 in the cement gland. Weakly expressed in the pronephros from stage 24 or 25, with expression increasing in strength by stage 30 and continuing at least until stage 37. Expression in the developing pronephros correlates with epithelialization of the proximal pronephric tubules.

It catalyses the reaction L-seryl-[protein] + ATP = O-phospho-L-seryl-[protein] + ADP + H(+). The catalysed reaction is L-threonyl-[protein] + ATP = O-phospho-L-threonyl-[protein] + ADP + H(+). Homodimerization via the leucine zipper domains is required for autophosphorylation and subsequent activation. In terms of biological role, activates the JUN N-terminal pathway. Essential for pronephros and cement gland development. In Xenopus laevis (African clawed frog), this protein is Mitogen-activated protein kinase kinase kinase 10 (map3k10).